Reading from the N-terminus, the 308-residue chain is UDP-N-acetylenolpyruvoylglucosamine reductase (308 aa).

One can recognise an FAD-binding PCMH-type domain in the interval 35–200 (RVGGPAQVLF…TSARFRGEPM (166 aa)). The active site involves Arg-180. Residues 211–226 (EVQRHRETAQPVREKT) are compositionally biased toward basic and acidic residues. The interval 211 to 236 (EVQRHRETAQPVREKTGGSTFKNPPG) is disordered. The Proton donor role is filled by Ser-229. Residue Glu-299 is part of the active site.

This sequence belongs to the MurB family. Requires FAD as cofactor.

It is found in the cytoplasm. It catalyses the reaction UDP-N-acetyl-alpha-D-muramate + NADP(+) = UDP-N-acetyl-3-O-(1-carboxyvinyl)-alpha-D-glucosamine + NADPH + H(+). Its pathway is cell wall biogenesis; peptidoglycan biosynthesis. In terms of biological role, cell wall formation. This Rhodopseudomonas palustris (strain BisB18) protein is UDP-N-acetylenolpyruvoylglucosamine reductase.